A 460-amino-acid polypeptide reads, in one-letter code: 3-isopropylmalate dehydratase large subunit (460 aa).

[4Fe-4S] cluster contacts are provided by Cys-338, Cys-398, and Cys-401.

Belongs to the aconitase/IPM isomerase family. LeuC type 1 subfamily. In terms of assembly, heterodimer of LeuC and LeuD. [4Fe-4S] cluster serves as cofactor.

The catalysed reaction is (2R,3S)-3-isopropylmalate = (2S)-2-isopropylmalate. The protein operates within amino-acid biosynthesis; L-leucine biosynthesis; L-leucine from 3-methyl-2-oxobutanoate: step 2/4. Its function is as follows. Catalyzes the isomerization between 2-isopropylmalate and 3-isopropylmalate, via the formation of 2-isopropylmaleate. The polypeptide is 3-isopropylmalate dehydratase large subunit (Streptococcus thermophilus (strain ATCC BAA-491 / LMD-9)).